The sequence spans 234 residues: LexA repressor (234 aa).

A DNA-binding region (H-T-H motif) is located at residues 26 to 46; sequence FDEMKEALDLASKSGIHRLIT. The tract at residues 73-107 is disordered; sequence ATAAAPPKGRGAFRPQVFEGGGAPPPAASPAAAAN. Residues S155 and K192 each act as for autocatalytic cleavage activity in the active site.

This sequence belongs to the peptidase S24 family. As to quaternary structure, homodimer.

The catalysed reaction is Hydrolysis of Ala-|-Gly bond in repressor LexA.. Functionally, represses a number of genes involved in the response to DNA damage (SOS response), including recA and lexA. In the presence of single-stranded DNA, RecA interacts with LexA causing an autocatalytic cleavage which disrupts the DNA-binding part of LexA, leading to derepression of the SOS regulon and eventually DNA repair. This Caulobacter vibrioides (strain ATCC 19089 / CIP 103742 / CB 15) (Caulobacter crescentus) protein is LexA repressor.